A 1259-amino-acid polypeptide reads, in one-letter code: Protein flightless-1 homolog (1259 aa).

LRR repeat units follow at residues 7–32, 33–55, 56–78, 80–103, 104–126, 128–149, 150–173, 176–201, 222–245, 247–268, 269–291, 293–316, 317–339, 340–363, and 365–385; these read LPFI…VKSM, TSLR…LASL, QKLE…LSSL, NLRA…IFQL, DDLS…LENS, NMLV…LFIN, LTDL…MRRL, LQTL…VSLQ, LSNL…LYSL, NLKR…IDQW, TKLE…ICKL, KLKK…VGKL, SNLV…LCRC, GKLK…HFLT, and LEVL…PVDR. Gelsolin-like repeat units lie at residues 509 to 589, 628 to 702, 757 to 830, and 1170 to 1225; these read IPIQ…SEEF, NIRL…PEFW, DVVP…CQVF, and EKCS…RSKD.

In terms of tissue distribution, expressed in ventricular cardiomyocytes, where it particularly localizes to intercalated disks and costamere-like structures (at protein level).

The protein localises to the nucleus. It is found in the cytoplasm. It localises to the cytoskeleton. Its subcellular location is the microtubule organizing center. The protein resides in the centrosome. The protein localises to the cell junction. It is found in the focal adhesion. Functionally, is a regulator of actin polymerization, required for proper myofibril organization and the assembly of cardiomyocyte cell adhesion complexes. Is a regulator of the length of sarcomeric thin filaments. Regulates cytoskeletal rearrangements involved in cytokinesis and cell migration, by inhibiting Rac1-dependent paxillin phosphorylation. May play a role as coactivator in transcriptional activation by hormone-activated nuclear receptors (NR) and acts in cooperation with NCOA2 and CARM1. Involved in estrogen hormone signaling. This chain is Protein flightless-1 homolog, found in Danio rerio (Zebrafish).